The chain runs to 420 residues: Imidazolonepropionase (420 aa).

Fe(3+) is bound by residues H77 and H79. The Zn(2+) site is built by H77 and H79. 3 residues coordinate 4-imidazolone-5-propanoate: R86, Y149, and H182. Y149 is a binding site for N-formimidoyl-L-glutamate. Residue H245 participates in Fe(3+) binding. H245 is a Zn(2+) binding site. E248 is a binding site for 4-imidazolone-5-propanoate. Residue D319 participates in Fe(3+) binding. D319 is a binding site for Zn(2+). Position 321 (N321) interacts with N-formimidoyl-L-glutamate.

It belongs to the metallo-dependent hydrolases superfamily. HutI family. Zn(2+) serves as cofactor. Requires Fe(3+) as cofactor.

The protein localises to the cytoplasm. It catalyses the reaction 4-imidazolone-5-propanoate + H2O = N-formimidoyl-L-glutamate. It participates in amino-acid degradation; L-histidine degradation into L-glutamate; N-formimidoyl-L-glutamate from L-histidine: step 3/3. In terms of biological role, catalyzes the hydrolytic cleavage of the carbon-nitrogen bond in imidazolone-5-propanoate to yield N-formimidoyl-L-glutamate. It is the third step in the universal histidine degradation pathway. This Haloarcula marismortui (strain ATCC 43049 / DSM 3752 / JCM 8966 / VKM B-1809) (Halobacterium marismortui) protein is Imidazolonepropionase.